The sequence spans 212 residues: Probable GTP-binding protein EngB (212 aa).

Positions 38–210 (SLPEIAFVGK…KASLAKCIKF (173 aa)) constitute an EngB-type G domain. GTP contacts are provided by residues 46–53 (GKSNVGKS), 73–77 (GRTRQ), 91–94 (DLPG), 158–161 (TKSD), and 189–191 (VSN). Mg(2+) is bound by residues Ser53 and Thr75.

The protein belongs to the TRAFAC class TrmE-Era-EngA-EngB-Septin-like GTPase superfamily. EngB GTPase family. It depends on Mg(2+) as a cofactor.

Functionally, necessary for normal cell division and for the maintenance of normal septation. In Rickettsia rickettsii (strain Sheila Smith), this protein is Probable GTP-binding protein EngB.